A 330-amino-acid chain; its full sequence is Daunorubicin/doxorubicin resistance ATP-binding protein DrrA (330 aa).

The ABC transporter domain maps to 9 to 239 (IETSGLVKVY…LGSNVLRLRL (231 aa)). 41 to 48 (GPNGAGKS) provides a ligand contact to ATP.

The protein belongs to the ABC transporter superfamily. Drug exporter-1 (DrugE1) (TC 3.A.1.105) family. As to quaternary structure, the complex is composed of two ATP-binding proteins (DrrA) and two transmembrane proteins (DrrB).

It localises to the cell membrane. It carries out the reaction daunorubicin(in) + ATP + H2O = daunorubicin(out) + ADP + phosphate + H(+). Functionally, part of the ABC transporter complex DrrAB involved in daunorubicin and doxorubicin resistance. Responsible for energy coupling to the transport system. Binds ATP or GTP. This is Daunorubicin/doxorubicin resistance ATP-binding protein DrrA (drrA) from Streptomyces peucetius.